Here is a 44-residue protein sequence, read N- to C-terminus: Photosystem I reaction center subunit IX (44 aa).

A helical membrane pass occupies residues 7–27 (YLSVAPVLSTLWFGSLAGLLI).

It belongs to the PsaJ family.

Its subcellular location is the plastid. The protein resides in the chloroplast thylakoid membrane. Functionally, may help in the organization of the PsaE and PsaF subunits. This is Photosystem I reaction center subunit IX from Lactuca sativa (Garden lettuce).